The chain runs to 493 residues: 3-octaprenyl-4-hydroxybenzoate carboxy-lyase (493 aa).

A Mn(2+)-binding site is contributed by Asn-177. Prenylated FMN-binding positions include 180 to 182, 194 to 196, and 199 to 200; these read IYR, RWL, and RG. Mn(2+) is bound at residue Glu-243. Residue Asp-292 is the Proton donor of the active site.

This sequence belongs to the UbiD family. Homohexamer. It depends on prenylated FMN as a cofactor. Requires Mn(2+) as cofactor.

The protein resides in the cell membrane. It catalyses the reaction a 4-hydroxy-3-(all-trans-polyprenyl)benzoate + H(+) = a 2-(all-trans-polyprenyl)phenol + CO2. It participates in cofactor biosynthesis; ubiquinone biosynthesis. Functionally, catalyzes the decarboxylation of 3-octaprenyl-4-hydroxy benzoate to 2-octaprenylphenol, an intermediate step in ubiquinone biosynthesis. The sequence is that of 3-octaprenyl-4-hydroxybenzoate carboxy-lyase from Colwellia psychrerythraea (strain 34H / ATCC BAA-681) (Vibrio psychroerythus).